The following is a 60-amino-acid chain: Large ribosomal subunit protein bL32 (60 aa).

The disordered stretch occupies residues Met-1–Lys-21. Residues His-7–Tyr-20 are compositionally biased toward basic residues.

It belongs to the bacterial ribosomal protein bL32 family.

This chain is Large ribosomal subunit protein bL32, found in Streptococcus equi subsp. zooepidemicus (strain H70).